Here is a 177-residue protein sequence, read N- to C-terminus: MSRIGKKAVAVPSGVTVTIDGQTVTVKGPKGQLAWTVAEEIEVRQEGAEILLSKRDESTRAQAMWGLSRTLVNNMVVGVTQGYEQTLELVGVGYRAAMKGQALSMQLGFSHDVDVAPPAGITFATPKQTEIKISGIDKQLVGETAARIRRLRPPEPYKGKGVRYAGENVRRKEGKKK.

The interval 151 to 177 (LRPPEPYKGKGVRYAGENVRRKEGKKK) is disordered.

Belongs to the universal ribosomal protein uL6 family. Part of the 50S ribosomal subunit.

Its function is as follows. This protein binds to the 23S rRNA, and is important in its secondary structure. It is located near the subunit interface in the base of the L7/L12 stalk, and near the tRNA binding site of the peptidyltransferase center. This Phenylobacterium zucineum (strain HLK1) protein is Large ribosomal subunit protein uL6.